Reading from the N-terminus, the 277-residue chain is Polyamine aminopropyltransferase (277 aa).

The PABS domain occupies 2 to 235 (ELWFTENQDE…SLWTFTMGSK (234 aa)). S-methyl-5'-thioadenosine is bound at residue glutamine 31. Residues histidine 62 and aspartate 86 each coordinate spermidine. S-methyl-5'-thioadenosine-binding positions include glutamate 106 and 137 to 138 (DG). The active-site Proton acceptor is aspartate 155. 155–158 (DSTD) serves as a coordination point for spermidine. An S-methyl-5'-thioadenosine-binding site is contributed by proline 162.

Belongs to the spermidine/spermine synthase family. As to quaternary structure, homodimer or homotetramer.

Its subcellular location is the cytoplasm. The catalysed reaction is S-adenosyl 3-(methylsulfanyl)propylamine + putrescine = S-methyl-5'-thioadenosine + spermidine + H(+). Its pathway is amine and polyamine biosynthesis; spermidine biosynthesis; spermidine from putrescine: step 1/1. Its function is as follows. Catalyzes the irreversible transfer of a propylamine group from the amino donor S-adenosylmethioninamine (decarboxy-AdoMet) to putrescine (1,4-diaminobutane) to yield spermidine. This is Polyamine aminopropyltransferase from Thermoanaerobacter pseudethanolicus (strain ATCC 33223 / 39E) (Clostridium thermohydrosulfuricum).